The primary structure comprises 348 residues: Phosphate acyltransferase (348 aa).

The protein belongs to the PlsX family. In terms of assembly, homodimer. Probably interacts with PlsY.

It is found in the cytoplasm. The catalysed reaction is a fatty acyl-[ACP] + phosphate = an acyl phosphate + holo-[ACP]. Its pathway is lipid metabolism; phospholipid metabolism. Its function is as follows. Catalyzes the reversible formation of acyl-phosphate (acyl-PO(4)) from acyl-[acyl-carrier-protein] (acyl-ACP). This enzyme utilizes acyl-ACP as fatty acyl donor, but not acyl-CoA. This is Phosphate acyltransferase from Rhizorhabdus wittichii (strain DSM 6014 / CCUG 31198 / JCM 15750 / NBRC 105917 / EY 4224 / RW1) (Sphingomonas wittichii).